A 568-amino-acid polypeptide reads, in one-letter code: Pyruvate carboxylase subunit B (568 aa).

In terms of domain architecture, Pyruvate carboxyltransferase spans 4 to 264; the sequence is IKVVETAFRD…DTGLDLEILK (261 aa). Substrate contacts are provided by residues 12-16 and arginine 83; that span reads RDAHQ. Position 13 (aspartate 13) interacts with a divalent metal cation. A divalent metal cation-binding residues include lysine 174, histidine 203, and histidine 205. Lysine 174 bears the N6-carboxylysine mark. Position 339 (threonine 339) interacts with substrate. Residues 493 to 568 enclose the Biotinyl-binding domain; the sequence is PEPVDVEGAV…ETGDIIMVIK (76 aa). Lysine 534 carries the post-translational modification N6-biotinyllysine.

In terms of assembly, heterooctamer of four A and four B subunits. Mg(2+) serves as cofactor. The cofactor is Mn(2+). Requires Co(2+) as cofactor.

The catalysed reaction is hydrogencarbonate + pyruvate + ATP = oxaloacetate + ADP + phosphate + H(+). With respect to regulation, inhibited by ADP and alpha-ketoglutarate. Pyruvate carboxylase catalyzes a 2-step reaction, involving the ATP-dependent carboxylation of the covalently attached biotin in the first step and the transfer of the carboxyl group to pyruvate in the second. The protein is Pyruvate carboxylase subunit B (pycB) of Methanothermobacter thermautotrophicus (strain ATCC 29096 / DSM 1053 / JCM 10044 / NBRC 100330 / Delta H) (Methanobacterium thermoautotrophicum).